A 151-amino-acid polypeptide reads, in one-letter code: Putative phosphatidylglycerol/phosphatidylinositol transfer protein 1 (151 aa).

The first 26 residues, 1-26 (MKHSKNQIVYITFFIIILIVVKPIES), serve as a signal peptide directing secretion.

The protein belongs to the NPC2 family. In terms of assembly, monomer.

Catalyzes the intermembrane transfer of phosphatidylglycerol and phosphatidylinositol. In Dictyostelium discoideum (Social amoeba), this protein is Putative phosphatidylglycerol/phosphatidylinositol transfer protein 1.